Reading from the N-terminus, the 357-residue chain is DNA replication and repair protein RecF (357 aa).

30–37 (GANGSGKT) serves as a coordination point for ATP.

This sequence belongs to the RecF family.

The protein localises to the cytoplasm. Its function is as follows. The RecF protein is involved in DNA metabolism; it is required for DNA replication and normal SOS inducibility. RecF binds preferentially to single-stranded, linear DNA. It also seems to bind ATP. This Escherichia coli O7:K1 (strain IAI39 / ExPEC) protein is DNA replication and repair protein RecF.